A 503-amino-acid chain; its full sequence is ATP synthase subunit alpha (503 aa).

An ATP-binding site is contributed by 170 to 177 (GDRQTGKT).

Belongs to the ATPase alpha/beta chains family. F-type ATPases have 2 components, CF(1) - the catalytic core - and CF(0) - the membrane proton channel. CF(1) has five subunits: alpha(3), beta(3), gamma(1), delta(1), epsilon(1). CF(0) has three main subunits: a(1), b(2) and c(9-12). The alpha and beta chains form an alternating ring which encloses part of the gamma chain. CF(1) is attached to CF(0) by a central stalk formed by the gamma and epsilon chains, while a peripheral stalk is formed by the delta and b chains.

The protein resides in the cell inner membrane. The catalysed reaction is ATP + H2O + 4 H(+)(in) = ADP + phosphate + 5 H(+)(out). Its function is as follows. Produces ATP from ADP in the presence of a proton gradient across the membrane. The alpha chain is a regulatory subunit. The sequence is that of ATP synthase subunit alpha from Geobacter metallireducens (strain ATCC 53774 / DSM 7210 / GS-15).